We begin with the raw amino-acid sequence, 303 residues long: Elongation factor Ts (303 aa).

The segment at 81–84 is involved in Mg(2+) ion dislocation from EF-Tu; it reads TDFV.

Belongs to the EF-Ts family.

Its subcellular location is the cytoplasm. Its function is as follows. Associates with the EF-Tu.GDP complex and induces the exchange of GDP to GTP. It remains bound to the aminoacyl-tRNA.EF-Tu.GTP complex up to the GTP hydrolysis stage on the ribosome. The chain is Elongation factor Ts from Mesomycoplasma hyopneumoniae (strain 7448) (Mycoplasma hyopneumoniae).